Consider the following 330-residue polypeptide: LIM domain-containing protein pin-2 (330 aa).

5 LIM zinc-binding domains span residues 21 to 73 (CERC…CEHD), 82 to 132 (CAKC…CFLC), 144 to 194 (CNKC…CPRC), 202 to 255 (CFDC…CRDD), and 264 to 315 (CFIC…CKKC).

Expressed in neurons and intestine.

The protein localises to the cytoplasm. The protein resides in the nucleus. This chain is LIM domain-containing protein pin-2 (pin-2), found in Caenorhabditis elegans.